A 91-amino-acid polypeptide reads, in one-letter code: MVVKTWMPWLLVSSVLSQGCCQHWSFGLSPGGKRELKYFPNTLENQIRLLNSNTPCSDLSHLEESSLAKIYRIKGLLGSVTEAKNGYRTYK.

The signal sequence occupies residues 1-21 (MVVKTWMPWLLVSSVLSQGCC). Glutamine 22 bears the Pyrrolidone carboxylic acid mark. Glycine amide is present on glycine 31.

It belongs to the GnRH family. Expressed in the cell bodies of a cluster of neurons in the preoptic region.

It is found in the secreted. Stimulates the secretion of gonadotropins. This Oryzias latipes (Japanese rice fish) protein is Progonadoliberin-1 (gnrh1).